A 275-amino-acid chain; its full sequence is NAD kinase (275 aa).

Asp66 acts as the Proton acceptor in catalysis. NAD(+) is bound by residues 66–67, His71, 135–136, Lys146, Arg163, Asp165, and 176–181; these read DG, NE, and TAYAMS.

The protein belongs to the NAD kinase family. A divalent metal cation serves as cofactor.

Its subcellular location is the cytoplasm. It carries out the reaction NAD(+) + ATP = ADP + NADP(+) + H(+). Functionally, involved in the regulation of the intracellular balance of NAD and NADP, and is a key enzyme in the biosynthesis of NADP. Catalyzes specifically the phosphorylation on 2'-hydroxyl of the adenosine moiety of NAD to yield NADP. This chain is NAD kinase, found in Methanosphaera stadtmanae (strain ATCC 43021 / DSM 3091 / JCM 11832 / MCB-3).